Reading from the N-terminus, the 533-residue chain is Retinoid isomerohydrolase (533 aa).

S2 carries the N-acetylserine modification. C112 is lipidated: S-palmitoyl cysteine; in membrane form. H180 lines the Fe cation pocket. The S-palmitoyl cysteine; in membrane form moiety is linked to residue C231. H241 and H313 together coordinate Fe cation. 2 S-palmitoyl cysteine; in membrane form lipidation sites follow: C329 and C330. H527 lines the Fe cation pocket.

The protein belongs to the carotenoid oxygenase family. Fe(2+) is required as a cofactor. Palmitoylation by LRAT regulates ligand binding specificity; the palmitoylated form (membrane form) specifically binds all-trans-retinyl-palmitate, while the soluble unpalmitoylated form binds all-trans-retinol (vitamin A). As to expression, retinal pigment epithelium specific.

Its subcellular location is the cell membrane. It catalyses the reaction an all-trans-retinyl ester + H2O = 11-cis-retinol + a fatty acid + H(+). The catalysed reaction is lutein = (3R,3'S)-zeaxanthin. It carries out the reaction all-trans-retinyl hexadecanoate + H2O = 11-cis-retinol + hexadecanoate + H(+). Its function is as follows. Critical isomerohydrolase in the retinoid cycle involved in regeneration of 11-cis-retinal, the chromophore of rod and cone opsins. Catalyzes the cleavage and isomerization of all-trans-retinyl fatty acid esters to 11-cis-retinol which is further oxidized by 11-cis retinol dehydrogenase to 11-cis-retinal for use as visual chromophore. Essential for the production of 11-cis retinal for both rod and cone photoreceptors. Also capable of catalyzing the isomerization of lutein to meso-zeaxanthin an eye-specific carotenoid. The soluble form binds vitamin A (all-trans-retinol), making it available for LRAT processing to all-trans-retinyl ester. The membrane form, palmitoylated by LRAT, binds all-trans-retinyl esters, making them available for IMH (isomerohydrolase) processing to all-cis-retinol. The soluble form is regenerated by transferring its palmitoyl groups onto 11-cis-retinol, a reaction catalyzed by LRAT. This is Retinoid isomerohydrolase (RPE65) from Cynops pyrrhogaster (Japanese fire-bellied newt).